We begin with the raw amino-acid sequence, 765 residues long: MKSQACLKVCLALIGLVSIVSTAYIANDVVSDYAEVKELLAAFYRKHAKKYGHDYDPAAIQAIAENMDKSVKNDKTEATVNRKLWNEVFENDIILTLPQAESLLSESNSPRSRRQAHPDPRNFWPNLTISYEFYGGEETWRQLIRSAIRHVEQNVCFKFKENGGDRDGLRYYRGNGCWSNVGRVGGRQLVSIGYGCDSLGIVSHETLHALGLWHEQSRDDRDNFISIVADKITRGTEGNFAKRTAANSDNLGQPYDLGSVMHYGAKSFAYDWSSDTIKTRDWRYQNTIGQRDGLSFKDAKMINTRYCSNVCQRSLPCLNEGYTDPNNCGRCRCPSGYGGTYCETVEYTSCGGSLTASSSYKKIESGIVQPDANCVWRIRNPGGNVEVMFDQVNFQCADPCQSYVEVKYLSQKTSTGARLCCSLPSVIRSEGDDVIIILRGTPNTAVGWRGFTLKYRAIGGTPITPATVRPTYATTTRPYWTRTASGWIHIKNPPLYKPDGQIYTSDEQSAETKYSSEELYDPSTFLSPSSSSASPALLLPSDASPQRPSAQEHDLSQLSQNALTRPTPTTTVAPDTASWSAWGEWSACSQPCGGCGTKTRVRACYGGNQVCPGSNLDRESCNAHACAKPKKGMICNGRLLLPCDLLAKLNFGSNNYLNPKLKQSGFARSSTLPLPRISQRKPVFVNELEVHPPTERFLSSSTRRVKRQTANRFCEKRFIYQCPTALLTIQMEYKPDTQGTNDAYFQQYPECCSGYTPRRGVCYKN.

The first 22 residues, 1–22 (MKSQACLKVCLALIGLVSIVST), serve as a signal peptide directing secretion. The propeptide occupies 23–114 (AYIANDVVSD…SESNSPRSRR (92 aa)). The region spanning 115 to 308 (QAHPDPRNFW…AKMINTRYCS (194 aa)) is the Peptidase M12A domain. The N-linked (GlcNAc...) asparagine glycan is linked to N126. Cystine bridges form between C156–C307, C177–C196, C311–C331, C333–C342, C350–C374, and C400–C420. H204 contributes to the Zn(2+) binding site. E205 is an active-site residue. Residues H208 and H214 each coordinate Zn(2+). The EGF-like domain occupies 303 to 343 (NTRYCSNVCQRSLPCLNEGYTDPNNCGRCRCPSGYGGTYCE). Positions 350-458 (CGGSLTASSS…RGFTLKYRAI (109 aa)) constitute a CUB domain. The segment at 513 to 573 (KYSSEELYDP…TRPTPTTTVA (61 aa)) is disordered. Low complexity-rich tracts occupy residues 526 to 545 (LSPS…DASP) and 562 to 573 (ALTRPTPTTTVA). A TSP type-1 domain is found at 576 to 627 (TASWSAWGEWSACSQPCGGCGTKTRVRACYGGNQVCPGSNLDRESCNAHACA). Cystine bridges form between C588-C621, C592-C626, and C604-C611.

It depends on Zn(2+) as a cofactor. As to expression, expressed in hypodermal cells. Not expressed in the seam cells in L1 to L3 larvae, but it is present in seam cells of L4 larvae. Also expressed in attachment points of the cuticle at the anterior end of larvae, in the arcade cells in the mouth, the anterior pharynx, the amphid socket cells, and in the rectal epithelial cells at the posterior end of the larvae (at protein level).

Its subcellular location is the secreted. Functionally, metalloprotease. Plays an essential role in molting, a process during larval stages in which a new cuticle is formed and the old cuticle is shed. Required during ecdysis, the opening of the cuticle to allow the worm to escape. The protein is Zinc metalloproteinase nas-37 (nas-37) of Caenorhabditis elegans.